The primary structure comprises 130 residues: Glycine cleavage system H protein (130 aa).

Residues 25–106 (TALIGISDFA…PFDSWMIKVK (82 aa)) form the Lipoyl-binding domain. K66 carries the post-translational modification N6-lipoyllysine.

It belongs to the GcvH family. The glycine cleavage system is composed of four proteins: P, T, L and H. (R)-lipoate serves as cofactor.

Functionally, the glycine cleavage system catalyzes the degradation of glycine. The H protein shuttles the methylamine group of glycine from the P protein to the T protein. In Leptospira borgpetersenii serovar Hardjo-bovis (strain JB197), this protein is Glycine cleavage system H protein.